Consider the following 487-residue polypeptide: Diacylglycerol kinase 4 (487 aa).

Positions 86-242 constitute a DAGKc domain; that stretch reads TPEVPLMVFV…LDSWNILITM (157 aa).

It belongs to the eukaryotic diacylglycerol kinase family. In terms of assembly, monomer. As to expression, highly expressed in pollen grains. Expressed in roots, hypocotyls, leaf vasculature, developing anthers and stigmas, and receptacles of siliques.

The protein resides in the endoplasmic reticulum. It localises to the cytoplasm. The protein localises to the cytosol. The catalysed reaction is a 1,2-diacyl-sn-glycerol + ATP = a 1,2-diacyl-sn-glycero-3-phosphate + ADP + H(+). Functionally, phosphorylates the second messenger diacylglycerol (DAG) to generate phosphatidic acid (PA), another important signaling molecule. PA is required for plant development and responses to abiotic stress and pathogen attack. May be involved in the accumulation of PA during cold stress. Involved in the regulation of PA and phosphatidylcholine biosynthesis in growing pollen tubes. Required for nitric oxide-dependent pollen tube growth and re-orientation responses. Functions together with DGK2 in male gametophyte development and biosynthesis of phosphatidylglycerol and phosphatidylinositol in the endoplasmic reticulum (ER). Involved in PA production for pollen grain growth, as well as leaf and root growth. Possesses guanylyl cyclase activity in vitro. This chain is Diacylglycerol kinase 4, found in Arabidopsis thaliana (Mouse-ear cress).